Here is a 120-residue protein sequence, read N- to C-terminus: Large ribosomal subunit protein bL17 (120 aa).

This sequence belongs to the bacterial ribosomal protein bL17 family. Part of the 50S ribosomal subunit. Contacts protein L32.

The protein is Large ribosomal subunit protein bL17 of Geobacillus sp. (strain WCH70).